The primary structure comprises 207 residues: Ribosomal RNA small subunit methyltransferase G (207 aa).

S-adenosyl-L-methionine contacts are provided by residues Gly-76, Gln-81, 127–128 (VE), and Arg-141.

Belongs to the methyltransferase superfamily. RNA methyltransferase RsmG family.

Its subcellular location is the cytoplasm. It catalyses the reaction guanosine(527) in 16S rRNA + S-adenosyl-L-methionine = N(7)-methylguanosine(527) in 16S rRNA + S-adenosyl-L-homocysteine. In terms of biological role, specifically methylates the N7 position of guanine in position 527 of 16S rRNA. This is Ribosomal RNA small subunit methyltransferase G from Neisseria meningitidis serogroup A / serotype 4A (strain DSM 15465 / Z2491).